The chain runs to 372 residues: MTSTIAIDQKLINFLMFLGLPKSLSEFIWICIPILVVVLGSTLGVLVIVWLERKISAAVQQRIGPEYAGPLGIIQALIDGLKLILKEDIIPSKGDNWLFTLGPAIVVIPIVLSYLVVPFGPNLIVADIGIGIFFWIAISSVAPMGLLIAGYGSNNKYSLLGGLRAAAQAISYEIPLALCVLAIILMSHSLSTIEIVEQQAKYGILGWNIWRQPIGFFVFLISSLAECERLPFDLPEAEEELVAGYQTEYCGIKFGLFYVASYINLLVSALFVSVLYLGGWDFSIPFLNDYLTSTDFFSQWELNETIVGIMTGIIGLGITLVKAYIFLFLAVLTRWTLPRIRMDQLLDLGWKFLLPVCLGNLLLTASFQITLL.

8 helical membrane passes run 28–48 (IWIC…VLVI), 65–85 (PEYA…KLIL), 97–117 (WLFT…YLVV), 128–148 (IGIG…GLLI), 166–186 (AAQA…IILM), 254–274 (FGLF…FVSV), 312–332 (GIIG…LAVL), and 352–372 (FLLP…ITLL).

Belongs to the complex I subunit 1 family. NDH is composed of at least 16 different subunits, 5 of which are encoded in the nucleus.

It is found in the plastid. The protein resides in the chloroplast thylakoid membrane. The catalysed reaction is a plastoquinone + NADH + (n+1) H(+)(in) = a plastoquinol + NAD(+) + n H(+)(out). The enzyme catalyses a plastoquinone + NADPH + (n+1) H(+)(in) = a plastoquinol + NADP(+) + n H(+)(out). NDH shuttles electrons from NAD(P)H:plastoquinone, via FMN and iron-sulfur (Fe-S) centers, to quinones in the photosynthetic chain and possibly in a chloroplast respiratory chain. The immediate electron acceptor for the enzyme in this species is believed to be plastoquinone. Couples the redox reaction to proton translocation, and thus conserves the redox energy in a proton gradient. In Staurastrum punctulatum (Green alga), this protein is NAD(P)H-quinone oxidoreductase subunit 1, chloroplastic.